The following is a 268-amino-acid chain: Ribonuclease P protein subunit p30 (268 aa).

Alanine 2 is subject to N-acetylalanine. Phosphoserine is present on serine 251.

It belongs to the eukaryotic/archaeal RNase P protein component 3 family. Component of nuclear RNase P and RNase MRP ribonucleoproteins. RNase P consists of a catalytic RNA moiety and about 10 protein subunits; POP1, POP4, POP5, POP7, RPP14, RPP21, RPP25, RPP30, RPP38 and RPP40. Within the RNase P complex, POP1, POP7 and RPP25 form the 'finger' subcomplex, POP5, RPP14, RPP40 and homodimeric RPP30 form the 'palm' subcomplex, and RPP21, POP4 and RPP38 form the 'wrist' subcomplex. All subunits of the RNase P complex interact with the catalytic RNA. Several subunits of RNase P are also part of the RNase MRP complex. RNase MRP consists of a catalytic RNA moiety and about 8 protein subunits; POP1, POP7, RPP25, RPP30, RPP38, RPP40 and possibly also POP4 and POP5.

Its subcellular location is the nucleus. The protein resides in the nucleolus. Its function is as follows. Component of ribonuclease P, a ribonucleoprotein complex that generates mature tRNA molecules by cleaving their 5'-ends. Also a component of the MRP ribonuclease complex, which cleaves pre-rRNA sequences. In Mus musculus (Mouse), this protein is Ribonuclease P protein subunit p30 (Rpp30).